The sequence spans 189 residues: UPF0149 protein VFMJ11_2207 (189 aa).

It belongs to the UPF0149 family.

This is UPF0149 protein VFMJ11_2207 from Aliivibrio fischeri (strain MJ11) (Vibrio fischeri).